Consider the following 828-residue polypeptide: Periplasmic nitrate reductase (828 aa).

The segment at residues 1–31 (MKLSRRSFMKANAVAAAAAAAGLSVPGVARA) is a signal peptide (tat-type signal). A 4Fe-4S Mo/W bis-MGD-type domain is found at 39 to 95 (IKWDKAPCRFCGTGCGVLVGTQQGRVVACQGDPDAPVNRGLNCIKGYFLPKIMYGKD). [4Fe-4S] cluster is bound by residues C46, C49, C53, and C81. Mo-bis(molybdopterin guanine dinucleotide) contacts are provided by residues K83, Q150, N175, C179, 212–219 (WGSNMAEM), 243–247 (STFQH), 262–264 (QSD), M372, Q376, N482, 508–509 (SD), K531, D558, and 718–727 (TGRVLEHWHT). F794 contacts substrate. Mo-bis(molybdopterin guanine dinucleotide)-binding residues include N802 and K819.

The protein belongs to the prokaryotic molybdopterin-containing oxidoreductase family. NasA/NapA/NarB subfamily. Component of the periplasmic nitrate reductase NapAB complex composed of NapA and NapB. The cofactor is [4Fe-4S] cluster. Mo-bis(molybdopterin guanine dinucleotide) is required as a cofactor. Post-translationally, predicted to be exported by the Tat system. The position of the signal peptide cleavage has not been experimentally proven.

The protein resides in the periplasm. The enzyme catalyses 2 Fe(II)-[cytochrome] + nitrate + 2 H(+) = 2 Fe(III)-[cytochrome] + nitrite + H2O. Functionally, catalytic subunit of the periplasmic nitrate reductase complex NapAB. Receives electrons from NapB and catalyzes the reduction of nitrate to nitrite. This is Periplasmic nitrate reductase from Salmonella arizonae (strain ATCC BAA-731 / CDC346-86 / RSK2980).